We begin with the raw amino-acid sequence, 184 residues long: NADH-dependent flavin reductase subunit 2 (184 aa).

This sequence belongs to the NADH-dependent flavin reductase family. As to quaternary structure, requires LJ_0548 for activity, but the exact composition of the enzyme is unclear.

It carries out the reaction a reduced flavin + NAD(+) = an oxidized flavin + NADH + 2 H(+). Functionally, component of an enzyme that catalyzes the reduction of free flavins (FMN, FAD and riboflavin) by NADH; the reduced flavins produced by this reaction likely spontaneously react with oxygen, yielding hydrogen peroxide. Is responsible for the major H(2)O(2) production in L.johnsonii in the presence of oxygen. Cannot use NADPH instead of NADH as the electron donor. The sequence is that of NADH-dependent flavin reductase subunit 2 (nfr2) from Lactobacillus johnsonii (strain CNCM I-12250 / La1 / NCC 533).